We begin with the raw amino-acid sequence, 418 residues long: Calreticulin (418 aa).

The signal sequence occupies residues 1–17 (MLLPVPLLLGLLGLAAA). The interval 18-197 (EPVVYFKEQF…NSQVESGSLE (180 aa)) is N-domain. A Ca(2+)-binding site is contributed by Gln26. Position 48 is an N6-acetyllysine (Lys48). Positions 62 and 64 each coordinate Ca(2+). Lys64 is subject to N6-(2-hydroxyisobutyryl)lysine. A disulfide bridge links Cys105 with Cys137. An alpha-D-glucoside contacts are provided by Tyr109, Lys111, Tyr128, and Asp135. Lys159 is modified (N6-acetyllysine). The stretch at 191–202 (VESGSLEDDWDF) is one 1-1 repeat. The tract at residues 191–255 (VESGSLEDDW…DAKKPEDWDE (65 aa)) is 4 X approximate repeats. The tract at residues 193–277 (SGSLEDDWDF…NPEYKGEWKP (85 aa)) is disordered. Residues 198-308 (DDWDFLPPKK…YSPDANIYAY (111 aa)) are P-domain. The span at 207–251 (KIKDPDASKPEDWDERAKIDDPTDSKPEDWDKPEHIPDPDAKKPE) shows a compositional bias: basic and acidic residues. Lys209 bears the N6-acetyllysine mark. Repeat copies occupy residues 210–221 (DPDASKPEDWDE), 227–238 (DPTDSKPEDWDK), 244–255 (DPDAKKPEDWDE), 259–269 (GEWEPPVIQNP), 273–283 (GEWKPRQIDNP), and 287–297 (GTWIHPEIDNP). The segment at 237–270 (DKPEHIPDPDAKKPEDWDEEMDGEWEPPVIQNPE) is interaction with PPIB. Residues 252–261 (DWDEEMDGEW) show a composition bias toward acidic residues. The 3 X approximate repeats stretch occupies residues 259–297 (GEWEPPVIQNPEYKGEWKPRQIDNPDYKGTWIHPEIDNP). A C-domain region spans residues 309–418 (DSFAVLGLDL…AAAGQAKDEL (110 aa)). Asp317 contacts an alpha-D-glucoside. Residue Asp328 participates in Ca(2+) binding. Residues 349 to 418 (VTKTAEKQMK…AAAGQAKDEL (70 aa)) are disordered. A compositionally biased stretch (basic and acidic residues) spans 352–379 (TAEKQMKDKQDEEQRLKEEEEEKKRKEE). Positions 380 to 409 (EEAEEDEEDKDDKEDEDEDEEDKDEEEEEA) are enriched in acidic residues. The Prevents secretion from ER signature appears at 415 to 418 (KDEL).

Belongs to the calreticulin family. As to quaternary structure, monomer. Component of an EIF2 complex at least composed of CELF1/CUGBP1, CALR, CALR3, EIF2S1, EIF2S2, HSP90B1 and HSPA5. Interacts with PDIA3/ERp57 and SPACA9. Interacts with TRIM21. Interacts with NR3C1. Interacts with PPIB. Interacts (via P-domain) with PDIA5. Interacts with CLCC1.

Its subcellular location is the endoplasmic reticulum lumen. The protein resides in the cytoplasm. The protein localises to the cytosol. It localises to the secreted. It is found in the extracellular space. Its subcellular location is the extracellular matrix. The protein resides in the cell surface. The protein localises to the sarcoplasmic reticulum lumen. It localises to the cytoplasmic vesicle. It is found in the secretory vesicle. Its subcellular location is the cortical granule. The protein resides in the cytolytic granule. Functionally, calcium-binding chaperone that promotes folding, oligomeric assembly and quality control in the endoplasmic reticulum (ER) via the calreticulin/calnexin cycle. This lectin interacts transiently with almost all of the monoglucosylated glycoproteins that are synthesized in the ER. Interacts with the DNA-binding domain of NR3C1 and mediates its nuclear export. Involved in maternal gene expression regulation. May participate in oocyte maturation via the regulation of calcium homeostasis. Present in the cortical granules of non-activated oocytes, is exocytosed during the cortical reaction in response to oocyte activation and might participate in the block to polyspermy. The chain is Calreticulin (CALR) from Oryctolagus cuniculus (Rabbit).